Reading from the N-terminus, the 149-residue chain is Nucleoside diphosphate kinase (149 aa).

K9, F57, R85, T91, R102, and N112 together coordinate ATP. H115 (pros-phosphohistidine intermediate) is an active-site residue.

The protein belongs to the NDK family. As to quaternary structure, homotetramer. The cofactor is Mg(2+).

The protein resides in the cytoplasm. The enzyme catalyses a 2'-deoxyribonucleoside 5'-diphosphate + ATP = a 2'-deoxyribonucleoside 5'-triphosphate + ADP. It carries out the reaction a ribonucleoside 5'-diphosphate + ATP = a ribonucleoside 5'-triphosphate + ADP. In terms of biological role, major role in the synthesis of nucleoside triphosphates other than ATP. The ATP gamma phosphate is transferred to the NDP beta phosphate via a ping-pong mechanism, using a phosphorylated active-site intermediate. This is Nucleoside diphosphate kinase from Synechocystis sp. (strain ATCC 27184 / PCC 6803 / Kazusa).